Consider the following 715-residue polypeptide: Formate dehydrogenase H (715 aa).

The region spanning 1–56 is the 4Fe-4S Mo/W bis-MGD-type domain; sequence MKKVVTVCPYCASGCKINLVVDNGKIVRAEAAQGKTNQGTLCLKGYYGWDFINDTQ. Cys-8, Cys-11, Cys-15, and Cys-42 together coordinate [4Fe-4S] cluster. Lys-44 (electron donor/acceptor) is an active-site residue. Positions 110, 140, 176, 179, 180, 201, 202, 204, 221, 223, 297, 335, 404, 408, 428, 429, 445, 478, 581, 582, 585, 587, 678, and 679 each coordinate Mo-bis(molybdopterin guanine dinucleotide). The Proton donor/acceptor role is filled by Sec-140. Residue Sec-140 is a non-standard amino acid, selenocysteine.

The protein belongs to the prokaryotic molybdopterin-containing oxidoreductase family. Consists of two separable enzymatic activities: a formate dehydrogenase component (FDH-H) and hydrogenase-3. The cofactor is [4Fe-4S] cluster. Mo-bis(molybdopterin guanine dinucleotide) serves as cofactor.

The enzyme catalyses formate + A + H(+) = AH2 + CO2. With respect to regulation, inhibited by aerobic conditions. Its function is as follows. Decomposes formic acid to hydrogen and carbon dioxide under anaerobic conditions in the absence of exogenous electron acceptors. This Escherichia coli (strain K12) protein is Formate dehydrogenase H (fdhF).